The chain runs to 437 residues: Glutamate-1-semialdehyde 2,1-aminomutase (437 aa).

Position 274 is an N6-(pyridoxal phosphate)lysine (lysine 274).

Belongs to the class-III pyridoxal-phosphate-dependent aminotransferase family. HemL subfamily. Homodimer. Pyridoxal 5'-phosphate is required as a cofactor.

Its subcellular location is the cytoplasm. It carries out the reaction (S)-4-amino-5-oxopentanoate = 5-aminolevulinate. Its pathway is porphyrin-containing compound metabolism; protoporphyrin-IX biosynthesis; 5-aminolevulinate from L-glutamyl-tRNA(Glu): step 2/2. The polypeptide is Glutamate-1-semialdehyde 2,1-aminomutase (Leptothrix cholodnii (strain ATCC 51168 / LMG 8142 / SP-6) (Leptothrix discophora (strain SP-6))).